We begin with the raw amino-acid sequence, 209 residues long: Ribonuclease HII (209 aa).

Residues 19-209 (CTIVGVDEVG…ASGITKLYNK (191 aa)) enclose the RNase H type-2 domain. A divalent metal cation contacts are provided by Asp-25, Glu-26, and Asp-118.

The protein belongs to the RNase HII family. It depends on Mn(2+) as a cofactor. The cofactor is Mg(2+).

It is found in the cytoplasm. The catalysed reaction is Endonucleolytic cleavage to 5'-phosphomonoester.. Its function is as follows. Endonuclease that specifically degrades the RNA of RNA-DNA hybrids. The polypeptide is Ribonuclease HII (Ehrlichia chaffeensis (strain ATCC CRL-10679 / Arkansas)).